A 149-amino-acid polypeptide reads, in one-letter code: Urease accessory protein UreE (149 aa).

This sequence belongs to the UreE family.

The protein resides in the cytoplasm. Involved in urease metallocenter assembly. Binds nickel. Probably functions as a nickel donor during metallocenter assembly. The sequence is that of Urease accessory protein UreE from Prochlorococcus marinus (strain MIT 9301).